The following is a 461-amino-acid chain: tRNA modification GTPase MnmE (461 aa).

(6S)-5-formyl-5,6,7,8-tetrahydrofolate-binding residues include R23, E88, and R127. The region spanning 223–383 (GLNTVIVGKP…LKECIKNLFF (161 aa)) is the TrmE-type G domain. N233 contributes to the K(+) binding site. Residues 233-238 (NVGKSS), 252-258 (TEIPGTT), and 277-280 (DTAG) each bind GTP. Residue S237 coordinates Mg(2+). K(+)-binding residues include T252, I254, and T257. T258 provides a ligand contact to Mg(2+). Residue K461 coordinates (6S)-5-formyl-5,6,7,8-tetrahydrofolate.

Belongs to the TRAFAC class TrmE-Era-EngA-EngB-Septin-like GTPase superfamily. TrmE GTPase family. In terms of assembly, homodimer. Heterotetramer of two MnmE and two MnmG subunits. Requires K(+) as cofactor.

Its subcellular location is the cytoplasm. Its function is as follows. Exhibits a very high intrinsic GTPase hydrolysis rate. Involved in the addition of a carboxymethylaminomethyl (cmnm) group at the wobble position (U34) of certain tRNAs, forming tRNA-cmnm(5)s(2)U34. The polypeptide is tRNA modification GTPase MnmE (Clostridium botulinum (strain Langeland / NCTC 10281 / Type F)).